Reading from the N-terminus, the 429-residue chain is Enolase (429 aa).

Glutamine 163 lines the (2R)-2-phosphoglycerate pocket. The active-site Proton donor is the glutamate 205. Aspartate 242, glutamate 285, and aspartate 312 together coordinate Mg(2+). Positions 337, 366, 367, and 388 each coordinate (2R)-2-phosphoglycerate. Lysine 337 serves as the catalytic Proton acceptor.

Belongs to the enolase family. Mg(2+) is required as a cofactor.

The protein localises to the cytoplasm. The protein resides in the secreted. It is found in the cell surface. It catalyses the reaction (2R)-2-phosphoglycerate = phosphoenolpyruvate + H2O. It functions in the pathway carbohydrate degradation; glycolysis; pyruvate from D-glyceraldehyde 3-phosphate: step 4/5. Its function is as follows. Catalyzes the reversible conversion of 2-phosphoglycerate (2-PG) into phosphoenolpyruvate (PEP). It is essential for the degradation of carbohydrates via glycolysis. This Azoarcus sp. (strain BH72) protein is Enolase.